The chain runs to 311 residues: Eukaryotic translation initiation factor 3 subunit E (311 aa).

Residues 100-280 form the PCI domain; the sequence is VYYNYPKGRD…MGVKSVSIHE (181 aa).

Belongs to the eIF-3 subunit E family. Component of the eukaryotic translation initiation factor 3 (eIF-3) complex.

It is found in the cytoplasm. Functionally, component of the eukaryotic translation initiation factor 3 (eIF-3) complex, which is involved in protein synthesis of a specialized repertoire of mRNAs and, together with other initiation factors, stimulates binding of mRNA and methionyl-tRNAi to the 40S ribosome. The eIF-3 complex specifically targets and initiates translation of a subset of mRNAs involved in cell proliferation. This is Eukaryotic translation initiation factor 3 subunit E from Caenorhabditis briggsae.